Reading from the N-terminus, the 133-residue chain is Small ribosomal subunit protein uS9 (133 aa).

Positions 97–113 (SKQELKSHGFLTRDPRK) are enriched in basic and acidic residues. Residues 97–133 (SKQELKSHGFLTRDPRKKERKKYGHKKARKSFQFSKR) form a disordered region. A compositionally biased stretch (basic residues) spans 114–133 (KERKKYGHKKARKSFQFSKR).

It belongs to the universal ribosomal protein uS9 family.

In Chlamydia abortus (strain DSM 27085 / S26/3) (Chlamydophila abortus), this protein is Small ribosomal subunit protein uS9.